A 248-amino-acid polypeptide reads, in one-letter code: 5'-nucleotidase SurE (248 aa).

Residues D8, D9, S39, and N91 each contribute to the a divalent metal cation site.

The protein belongs to the SurE nucleotidase family. A divalent metal cation is required as a cofactor.

The protein localises to the cytoplasm. The catalysed reaction is a ribonucleoside 5'-phosphate + H2O = a ribonucleoside + phosphate. Functionally, nucleotidase that shows phosphatase activity on nucleoside 5'-monophosphates. The protein is 5'-nucleotidase SurE of Marinomonas sp. (strain MWYL1).